Here is a 508-residue protein sequence, read N- to C-terminus: Polyamine oxidase FMS1 (508 aa).

The protein belongs to the flavin monoamine oxidase family. It depends on FAD as a cofactor.

It catalyses the reaction spermine + O2 + H2O = 3-aminopropanal + spermidine + H2O2. The enzyme catalyses spermidine + O2 + H2O = 3-aminopropanal + putrescine + H2O2. The catalysed reaction is N(1)-acetylspermine + O2 + H2O = 3-acetamidopropanal + spermidine + H2O2. It carries out the reaction N(1)-acetylspermidine + O2 + H2O = 3-acetamidopropanal + putrescine + H2O2. It catalyses the reaction N(8)-acetylspermidine + O2 + H2O = 4-acetamidobutanal + propane-1,3-diamine + H2O2. Functionally, involved in the production of beta-alanine, a precursor of pantothenic acid. Multicopy suppressor of fenpropimorph resistance. This chain is Polyamine oxidase FMS1 (FMS1), found in Saccharomyces cerevisiae (strain ATCC 204508 / S288c) (Baker's yeast).